Consider the following 378-residue polypeptide: TelA-like protein SAS1347 (378 aa).

It belongs to the TelA family.

The protein is TelA-like protein SAS1347 of Staphylococcus aureus (strain MSSA476).